A 56-amino-acid chain; its full sequence is Protein p56 (56 aa).

This sequence belongs to the phi29likevirus protein p56 family. Homodimer. Interacts with host UDG; this interaction inhibits the uracil-DNA glycosylase.

Functionally, inhibits the host uracil-DNA glycosylase (UDG), an enzyme which removes uracil residues from DNA by the base excision repair. Interacts with host uracil-DNA glycosylase and prevents the latter from binding to DNA. Since the viral DNA polymerase efficiently incorporates dUMP into DNA, the virus needs to prevent the deleterious effect caused by host UDG when it eliminates uracil residues present in the viral genome. The protein is Protein p56 (1B) of Bacillus phage PZA (Bacteriophage PZA).